We begin with the raw amino-acid sequence, 216 residues long: Cytochrome c-type protein Cgr1 (216 aa).

A helical membrane pass occupies residues 18 to 38 (WPIVVGVVVVVLIAAGAGFWV). Heme contacts are provided by C46, C50, H51, C95, C98, H99, C142, C147, H148, C176, C179, H180, C190, C193, and H194.

This sequence belongs to the multiheme cytochrome c family. In terms of assembly, may form a membrane-associated complex with Cgr2. Post-translationally, binds 5 heme groups per subunit.

It is found in the cell membrane. Functionally, probably transfers electrons from a membrane-associated electron donor (e.g. the membrane quinone pool) to the [4Fe-4S] cluster of the Cgr2 reductase via its covalently bound heme groups. This chain is Cytochrome c-type protein Cgr1, found in Eggerthella lenta (strain ATCC 25559 / DSM 2243 / CCUG 17323 / JCM 9979 / KCTC 3265 / NCTC 11813 / VPI 0255 / 1899 B) (Eubacterium lentum).